A 217-amino-acid polypeptide reads, in one-letter code: Large ribosomal subunit protein uL1 (217 aa).

Belongs to the universal ribosomal protein uL1 family. As to quaternary structure, part of the 50S ribosomal subunit.

Its function is as follows. Binds directly to 23S rRNA. Probably involved in E site tRNA release. Protein L1 is also a translational repressor protein, it controls the translation of its operon by binding to its mRNA. This is Large ribosomal subunit protein uL1 from Aeropyrum pernix (strain ATCC 700893 / DSM 11879 / JCM 9820 / NBRC 100138 / K1).